The sequence spans 158 residues: uncharacterized protein (158 aa).

An N-terminal signal peptide occupies residues 1-19; sequence MQKLLLAVLFFSLLAIATA. Residues 82-158 form a disordered region; sequence ANPKAEAEPG…VYENDDENEE (77 aa). Basic and acidic residues predominate over residues 84-107; that stretch reads PKAEAEPGSLDKEAGTKGEKEKNG. Residues 141–158 show a composition bias toward acidic residues; that stretch reads DDDDDHDDVYENDDENEE.

As to expression, prismatic layer of shell (at protein level). Expressed primarily in the mantle with highest level in the mantle edge and lower level in the mantle pallium.

It is found in the secreted. This is an uncharacterized protein from Pinctada maxima (Silver-lipped pearl oyster).